The chain runs to 577 residues: Proline--tRNA ligase (577 aa).

It belongs to the class-II aminoacyl-tRNA synthetase family. ProS type 1 subfamily. As to quaternary structure, homodimer.

The protein resides in the cytoplasm. It carries out the reaction tRNA(Pro) + L-proline + ATP = L-prolyl-tRNA(Pro) + AMP + diphosphate. In terms of biological role, catalyzes the attachment of proline to tRNA(Pro) in a two-step reaction: proline is first activated by ATP to form Pro-AMP and then transferred to the acceptor end of tRNA(Pro). As ProRS can inadvertently accommodate and process non-cognate amino acids such as alanine and cysteine, to avoid such errors it has two additional distinct editing activities against alanine. One activity is designated as 'pretransfer' editing and involves the tRNA(Pro)-independent hydrolysis of activated Ala-AMP. The other activity is designated 'posttransfer' editing and involves deacylation of mischarged Ala-tRNA(Pro). The misacylated Cys-tRNA(Pro) is not edited by ProRS. The sequence is that of Proline--tRNA ligase from Helicobacter pylori (strain HPAG1).